The primary structure comprises 645 residues: E3 ubiquitin-protein ligase ORTHRUS 2 (645 aa).

The segment at 12 to 63 (DGVCMRCKSNPPPEESLTCGTCVTPWHVSCLSSPPKTLASTLQWHCPDCSGE) adopts a PHD-type zinc-finger fold. The disordered stretch occupies residues 96–133 (LSTEEKAKMRQRLLSGKGVEEDDEEEKRKKKGKGKNPN). An RING-type 1 zinc finger spans residues 146–185 (CSFCMQLPERPVTKPCGHNACLKCFEKWMGQGKRTCGKCR). The YDG domain maps to 273–422 (VRNQGLLVGE…FKVCRYLFVR (150 aa)). The segment at 518–575 (CQICQQVLTLPVTTPCAHNFCKACLEAKFAGKTLVRERSTGGRTLRSRKNVLNCPCCP) adopts an RING-type 2 zinc-finger fold. A coiled-coil region spans residues 583-613 (QNPQVNREVAEVIEKLKTQEEDTAELEDEDE). The interval 599-645 (KTQEEDTAELEDEDEGECSGTTPEEDSEQPKKRIKLDTDATVSATIR) is disordered. Positions 603-625 (EDTAELEDEDEGECSGTTPEEDS) are enriched in acidic residues. Over residues 626–636 (EQPKKRIKLDT) the composition is skewed to basic and acidic residues.

Interacts with histones CENH3, HTB2, HTR3 and H4. As to expression, mostly expressed in inflorescence and, to a lower extent, in leaves.

It localises to the nucleus. The catalysed reaction is S-ubiquitinyl-[E2 ubiquitin-conjugating enzyme]-L-cysteine + [acceptor protein]-L-lysine = [E2 ubiquitin-conjugating enzyme]-L-cysteine + N(6)-ubiquitinyl-[acceptor protein]-L-lysine.. Its pathway is protein modification; protein ubiquitination. In terms of biological role, E3 ubiquitin-protein ligase. Participates in CpG methylation-dependent transcriptional regulation and epigenetic transcriptional silencing. Mediates ubiquitination with the E2 ubiquitin-conjugating enzyme UBC11. Promotes methylation-mediated gene silencing leading, for example, to early flowering. Associates with methylated DNA, and can bind to CpG, CpNpG, and CpNpN DNA motifs, with a strong preference for methylated forms, and with highest affinity for CpG substrate. Probably acts at the DNA methylation?histone interface to maintain centromeric heterochromatin. The protein is E3 ubiquitin-protein ligase ORTHRUS 2 (ORTH2) of Arabidopsis thaliana (Mouse-ear cress).